A 250-amino-acid chain; its full sequence is NAD(P)H-quinone oxidoreductase subunit K (250 aa).

[4Fe-4S] cluster contacts are provided by Cys-60, Cys-61, Cys-125, and Cys-156. Residues Glu-230–Ser-250 are disordered. Residues Pro-240–Ser-250 are compositionally biased toward polar residues.

This sequence belongs to the complex I 20 kDa subunit family. NDH-1 can be composed of about 15 different subunits; different subcomplexes with different compositions have been identified which probably have different functions. [4Fe-4S] cluster serves as cofactor.

Its subcellular location is the cellular thylakoid membrane. The enzyme catalyses a plastoquinone + NADH + (n+1) H(+)(in) = a plastoquinol + NAD(+) + n H(+)(out). It carries out the reaction a plastoquinone + NADPH + (n+1) H(+)(in) = a plastoquinol + NADP(+) + n H(+)(out). Its function is as follows. NDH-1 shuttles electrons from an unknown electron donor, via FMN and iron-sulfur (Fe-S) centers, to quinones in the respiratory and/or the photosynthetic chain. The immediate electron acceptor for the enzyme in this species is believed to be plastoquinone. Couples the redox reaction to proton translocation, and thus conserves the redox energy in a proton gradient. Cyanobacterial NDH-1 also plays a role in inorganic carbon-concentration. This Prochlorococcus marinus (strain MIT 9313) protein is NAD(P)H-quinone oxidoreductase subunit K.